The following is a 344-amino-acid chain: uncharacterized protein (344 aa).

Helical transmembrane passes span I155–V175, W181–W201, L221–F241, I254–L274, F291–V311, and A319–F339.

To M.jannaschii MJ1032.

It is found in the cell membrane. This is an uncharacterized protein from Archaeoglobus fulgidus (strain ATCC 49558 / DSM 4304 / JCM 9628 / NBRC 100126 / VC-16).